The chain runs to 61 residues: Disintegrin atroxatin (61 aa).

A Disintegrin domain is found at 1 to 61 (NPCCDAATCK…ADCPRKGIYG (61 aa)). 5 disulfide bridges follow: cysteine 3/cysteine 26, cysteine 9/cysteine 23, cysteine 17/cysteine 23, cysteine 22/cysteine 47, and cysteine 35/cysteine 54. Residues 39–41 (RGD) carry the Cell attachment site motif.

This sequence belongs to the venom metalloproteinase (M12B) family. P-II subfamily. P-IIa sub-subfamily. In terms of assembly, monomer (disintegrin). In terms of tissue distribution, expressed by the venom gland.

The protein localises to the secreted. Inhibits fibrinogen interaction with platelets. Acts by binding to alpha-IIb/beta-3 (ITGA2B/ITGB3) on the platelet surface and inhibits aggregation induced by ADP, thrombin, platelet-activating factor and collagen. The chain is Disintegrin atroxatin from Crotalus atrox (Western diamondback rattlesnake).